The chain runs to 348 residues: MIRISLDLMGGDFGPQVVIPGAAKALDRHPDISFVFYGLKEQCDPFLAKFPKLKEKSVFHDCELAVSMEEKPSQALRRGRYVSTMWRSIEAVKTGDADVAVSAGNTGALMAMAKFCLRTMANIERPAIAAIWPTLKGESIVLDVGATIGADAQQLMDFALMGGAMARALFEIERPTIGLLNVGVEEVKGQEEVKEAGRLLREANIDSLEYSGFVEGNDLGKGTVDVVVTEGFSGNIALKTAEGTAKQIAEYLRAAMSRTLLARIGYLFAKSAFDMLREKLDPSKVNGGVFLGLNGIVIKSHGGANAEGIAAAIEVGYDMAKNGLNQKIENDLKKYHAKRLPPIGPEAA.

The protein belongs to the PlsX family. Homodimer. Probably interacts with PlsY.

It localises to the cytoplasm. The enzyme catalyses a fatty acyl-[ACP] + phosphate = an acyl phosphate + holo-[ACP]. Its pathway is lipid metabolism; phospholipid metabolism. In terms of biological role, catalyzes the reversible formation of acyl-phosphate (acyl-PO(4)) from acyl-[acyl-carrier-protein] (acyl-ACP). This enzyme utilizes acyl-ACP as fatty acyl donor, but not acyl-CoA. In Rhizobium etli (strain ATCC 51251 / DSM 11541 / JCM 21823 / NBRC 15573 / CFN 42), this protein is Phosphate acyltransferase.